Consider the following 75-residue polypeptide: uncharacterized protein (75 aa).

This is an uncharacterized protein from Methanocaldococcus jannaschii (strain ATCC 43067 / DSM 2661 / JAL-1 / JCM 10045 / NBRC 100440) (Methanococcus jannaschii).